The chain runs to 562 residues: mRNA cleavage and polyadenylation factor CLP1 (562 aa).

The segment at 1–27 (MSLPGLELSQQPIEARRAPPQPTQISL) is disordered. Residues E32, K71, and 154-159 (DAGKTS) each bind ATP. Positions 415–483 (EDEYDPSKFD…STTPFTNLPS (69 aa)) are disordered. Over residues 445–479 (SLQPPSGLLPGLRSELPSATTGFPSASTSSTTPFT) the composition is skewed to low complexity.

Belongs to the Clp1 family. Clp1 subfamily. Component of a pre-mRNA cleavage factor complex. Interacts directly with PCF11.

The protein resides in the nucleus. Required for endonucleolytic cleavage during polyadenylation-dependent pre-mRNA 3'-end formation. The chain is mRNA cleavage and polyadenylation factor CLP1 from Coccidioides immitis (strain RS) (Valley fever fungus).